We begin with the raw amino-acid sequence, 96 residues long: Protein RnfH (96 aa).

This sequence belongs to the UPF0125 (RnfH) family.

The chain is Protein RnfH from Salmonella agona (strain SL483).